A 196-amino-acid polypeptide reads, in one-letter code: Imidazoleglycerol-phosphate dehydratase (196 aa).

The protein belongs to the imidazoleglycerol-phosphate dehydratase family.

Its subcellular location is the cytoplasm. The enzyme catalyses D-erythro-1-(imidazol-4-yl)glycerol 3-phosphate = 3-(imidazol-4-yl)-2-oxopropyl phosphate + H2O. It participates in amino-acid biosynthesis; L-histidine biosynthesis; L-histidine from 5-phospho-alpha-D-ribose 1-diphosphate: step 6/9. In Oleidesulfovibrio alaskensis (strain ATCC BAA-1058 / DSM 17464 / G20) (Desulfovibrio alaskensis), this protein is Imidazoleglycerol-phosphate dehydratase.